The following is a 69-amino-acid chain: DNA gyrase inhibitor YacG (69 aa).

Zn(2+) contacts are provided by Cys-7, Cys-10, Cys-26, and Cys-30.

Belongs to the DNA gyrase inhibitor YacG family. Interacts with GyrB. It depends on Zn(2+) as a cofactor.

Inhibits all the catalytic activities of DNA gyrase by preventing its interaction with DNA. Acts by binding directly to the C-terminal domain of GyrB, which probably disrupts DNA binding by the gyrase. The protein is DNA gyrase inhibitor YacG of Shewanella baltica (strain OS155 / ATCC BAA-1091).